Consider the following 982-residue polypeptide: Collagen alpha-1(I) chain (982 aa).

A disordered region spans residues 1-982 (GPMGPSGPRG…PGAPGPPGPP (982 aa)). A compositionally biased stretch (low complexity) spans 8–27 (PRGFQGPPGEPGEPGASGPM). Basic and acidic residues predominate over residues 39–53 (NGDDGEAGKPGRPGE). A Phosphoserine modification is found at Ser-81. 2 stretches are compositionally biased toward low complexity: residues 89–105 (DAGP…PGEN) and 128–141 (PAGA…TGAA). Residues 143–155 (PPGPTGPAGPPGF) are compositionally biased toward pro residues. Residues 189–228 (AGAAGPAGNPGADGQPGAKGANGAPGIAGAPGFPGARGPS) show a composition bias toward low complexity. Residues 294–303 (GERGGPGSRG) are compositionally biased toward gly residues. Low complexity-rich tracts occupy residues 304 to 335 (FPGA…PGEA), 347 to 373 (KGIT…QDGR), 382 to 401 (ARGQ…AGEP), 425 to 437 (AGAQ…AGPA), 513 to 526 (APGA…PGIQ), 583 to 597 (SGPS…ARGA), 610 to 640 (AGFA…AGPA), 666 to 682 (SAGP…AGRV), and 727 to 751 (AGEK…QGIA). Position 586 is a phosphoserine (Ser-586). Pro residues-rich tracts occupy residues 792–802 (PPGPIGPPGIA) and 838–853 (AGPP…PGPV). Positions 874-888 (IGPTGARGPAGPQGP) are enriched in low complexity. A compositionally biased stretch (basic and acidic residues) spans 889-900 (RGDKGETGEQGD). Over residues 916–940 (PGEQGPAGASGPAGPRGPPGSAGAP) the composition is skewed to low complexity. Positions 966 to 982 (PRGPPGPPGAPGPPGPP) are enriched in pro residues.

Belongs to the fibrillar collagen family. Trimers of one alpha 2(I) and two alpha 1(I) chains. Prolines at the third position of the tripeptide repeating unit (G-X-Y) are hydroxylated in some or all of the chains. Forms the fibrils of tendon, ligaments and bones. In bones, the fibrils are mineralized with calcium hydroxyapatite.

It localises to the secreted. It is found in the extracellular space. Its subcellular location is the extracellular matrix. Its function is as follows. Type I collagen is a member of group I collagen (fibrillar forming collagen). In Toxodon sp, this protein is Collagen alpha-1(I) chain.